Here is a 240-residue protein sequence, read N- to C-terminus: Uridylate kinase (240 aa).

12-15 (KLSG) serves as a coordination point for ATP. Residues 20–25 (GKQGFG) are involved in allosteric activation by GTP. Gly54 is a UMP binding site. Positions 55 and 59 each coordinate ATP. UMP is bound by residues Asp74 and 135-142 (TGNPYFST). The ATP site is built by Asn163, Tyr169, and Asp172.

Belongs to the UMP kinase family. In terms of assembly, homohexamer.

It is found in the cytoplasm. It catalyses the reaction UMP + ATP = UDP + ADP. Its pathway is pyrimidine metabolism; CTP biosynthesis via de novo pathway; UDP from UMP (UMPK route): step 1/1. Allosterically activated by GTP. Inhibited by UTP. Its function is as follows. Catalyzes the reversible phosphorylation of UMP to UDP. The sequence is that of Uridylate kinase from Geobacillus kaustophilus (strain HTA426).